A 270-amino-acid chain; its full sequence is uncharacterized protein (270 aa).

Disordered stretches follow at residues 1-21 and 53-77; these read MSTNINEEKCLEGDDIKYEKP and PNILSSKHDGDKNKNDKKKEDAKLN. The segment covering 58 to 75 has biased composition (basic and acidic residues); the sequence is SKHDGDKNKNDKKKEDAK. The stretch at 182-270 forms a coiled coil; sequence EENKSREEKH…KIEDNLNTYE (89 aa).

This is an uncharacterized protein from Plasmodium falciparum (isolate 3D7).